The following is a 78-amino-acid chain: Acyl carrier protein (78 aa).

A Carrier domain is found at methionine 1–glutamine 76. Position 36 is an O-(pantetheine 4'-phosphoryl)serine (serine 36).

The protein belongs to the acyl carrier protein (ACP) family. Post-translationally, 4'-phosphopantetheine is transferred from CoA to a specific serine of apo-ACP by AcpS. This modification is essential for activity because fatty acids are bound in thioester linkage to the sulfhydryl of the prosthetic group.

Its subcellular location is the cytoplasm. Its pathway is lipid metabolism; fatty acid biosynthesis. Carrier of the growing fatty acid chain in fatty acid biosynthesis. The sequence is that of Acyl carrier protein from Chlamydia felis (strain Fe/C-56) (Chlamydophila felis).